Reading from the N-terminus, the 371-residue chain is Phospho-N-acetylmuramoyl-pentapeptide-transferase (371 aa).

Helical transmembrane passes span 25-45 (YLTFRTGMSMLTAYVVAVAMG), 79-99 (TMGGFMILAGLFVGSLLFADL), 104-124 (VWVVLGITGSFGVLGFMDDYA), 139-159 (KLIAQFIISILAAVVLIIFAP), 179-199 (LVINLGWFYVAFAAITIAGFS), 210-230 (GLAIVPVMFAASTFGLIAYLV), 247-267 (VGELAVVCGAIIGGGMGFLWY), 274-294 (IFMGDTGSLALGGALGSIAVC), 299-319 (LVLGIVGGLFVAEALSVMIQV), and 348-368 (TVVIRFWIVAMMLSFVGLATL).

Belongs to the glycosyltransferase 4 family. MraY subfamily. Mg(2+) is required as a cofactor.

The protein localises to the cell inner membrane. It carries out the reaction UDP-N-acetyl-alpha-D-muramoyl-L-alanyl-gamma-D-glutamyl-meso-2,6-diaminopimeloyl-D-alanyl-D-alanine + di-trans,octa-cis-undecaprenyl phosphate = di-trans,octa-cis-undecaprenyl diphospho-N-acetyl-alpha-D-muramoyl-L-alanyl-D-glutamyl-meso-2,6-diaminopimeloyl-D-alanyl-D-alanine + UMP. It participates in cell wall biogenesis; peptidoglycan biosynthesis. In terms of biological role, catalyzes the initial step of the lipid cycle reactions in the biosynthesis of the cell wall peptidoglycan: transfers peptidoglycan precursor phospho-MurNAc-pentapeptide from UDP-MurNAc-pentapeptide onto the lipid carrier undecaprenyl phosphate, yielding undecaprenyl-pyrophosphoryl-MurNAc-pentapeptide, known as lipid I. The polypeptide is Phospho-N-acetylmuramoyl-pentapeptide-transferase (Caulobacter sp. (strain K31)).